The primary structure comprises 632 residues: Arginine--tRNA ligase (632 aa).

Residues 129–139 (ANPVHPLHVGS) carry the 'HIGH' region motif.

Belongs to the class-I aminoacyl-tRNA synthetase family.

It is found in the cytoplasm. It carries out the reaction tRNA(Arg) + L-arginine + ATP = L-arginyl-tRNA(Arg) + AMP + diphosphate. The protein is Arginine--tRNA ligase of Korarchaeum cryptofilum (strain OPF8).